Consider the following 95-residue polypeptide: MRNYEVMYIIKPEVEEEKVTALMEKFKSVVEEKGAEVTKLDKWGKRRLAYEINKIKEGIYVLMQFKAEPAASAELDRVMKINDDIVRHMIIREGE.

This sequence belongs to the bacterial ribosomal protein bS6 family.

Its function is as follows. Binds together with bS18 to 16S ribosomal RNA. This is Small ribosomal subunit protein bS6 from Desulforamulus reducens (strain ATCC BAA-1160 / DSM 100696 / MI-1) (Desulfotomaculum reducens).